Consider the following 172-residue polypeptide: GTP-dependent dephospho-CoA kinase (172 aa).

GTP is bound by residues Asp49, Val50, Val51, Asp68, Lys70, and Glu120.

Belongs to the GTP-dependent DPCK family.

The enzyme catalyses 3'-dephospho-CoA + GTP = GDP + CoA + H(+). The protein operates within cofactor biosynthesis; coenzyme A biosynthesis. Catalyzes the GTP-dependent phosphorylation of the 3'-hydroxyl group of dephosphocoenzyme A to form coenzyme A (CoA). The polypeptide is GTP-dependent dephospho-CoA kinase (Pyrobaculum arsenaticum (strain DSM 13514 / JCM 11321 / PZ6)).